Here is a 205-residue protein sequence, read N- to C-terminus: Small ribosomal subunit protein uS4 (205 aa).

The segment at 19–45 is disordered; that stretch reads IWGRPKSPVNRREYGPGQHGQRRKGKL. The 64-residue stretch at 94–157 folds into the S4 RNA-binding domain; sequence RRLDAVVYRA…KQLAFVLEAS (64 aa).

In terms of assembly, part of the 30S ribosomal subunit. Contacts protein S5. The interaction surface between S4 and S5 is involved in control of translational fidelity. In terms of processing, may be methylated on an undetermined residue.

One of the primary rRNA binding proteins, it binds directly to 16S rRNA where it nucleates assembly of the body of the 30S subunit. Functionally, with S5 and S12 plays an important role in translational accuracy. The polypeptide is Small ribosomal subunit protein uS4 (Rhodopseudomonas palustris (strain ATCC BAA-98 / CGA009)).